The chain runs to 234 residues: Carboxy-S-adenosyl-L-methionine synthase (234 aa).

S-adenosyl-L-methionine-binding positions include tyrosine 35, glycine 60–serine 62, aspartate 109–isoleucine 110, asparagine 124, and arginine 191.

The protein belongs to the class I-like SAM-binding methyltransferase superfamily. Cx-SAM synthase family. Homodimer.

It catalyses the reaction prephenate + S-adenosyl-L-methionine = carboxy-S-adenosyl-L-methionine + 3-phenylpyruvate + H2O. Its function is as follows. Catalyzes the conversion of S-adenosyl-L-methionine (SAM) to carboxy-S-adenosyl-L-methionine (Cx-SAM). The sequence is that of Carboxy-S-adenosyl-L-methionine synthase from Campylobacter fetus subsp. fetus (strain 82-40).